We begin with the raw amino-acid sequence, 532 residues long: Protein DETOXIFICATION 48 (532 aa).

12 consecutive transmembrane segments (helical) span residues 65 to 85, 95 to 115, 136 to 156, 174 to 194, 211 to 231, 235 to 255, 279 to 301, 322 to 342, 363 to 383, 397 to 417, 437 to 457, and 464 to 484; these read ISGP…ISML, LAGG…VISG, LGLT…PISF, ISSV…LLSL, VTYS…LLVV, MGVA…VVLL, GWSA…WWWY, GILI…SLGV, IISL…AVLV, ILQL…GNCP, INLG…GFVF, and LWFG…CALL. The disordered stretch occupies residues 496 to 532; it reads EELTSQTPGKSPPLLPIASSKSRSTSGTEDMMRTMLV. Residues 514–523 are compositionally biased toward polar residues; sequence SSKSRSTSGT.

It belongs to the multi antimicrobial extrusion (MATE) (TC 2.A.66.1) family. In terms of tissue distribution, highly expressed in shoot apices relative to leaves. At vegetative stages, highly expressed at the stipules. At reproductive stages, most highly expressed in the mature pollen. Also expressed in the tips of sepals.

The protein resides in the golgi apparatus membrane. Its subcellular location is the late endosome membrane. In terms of biological role, functions as a multidrug and toxin extrusion transporter. Contributes to iron homeostasis during stress responses and senescence. Could be involved in specifying the lateral organ initiation rate. May act as a negative regulator of hypocotyl cell elongation in the light. This chain is Protein DETOXIFICATION 48, found in Arabidopsis thaliana (Mouse-ear cress).